Reading from the N-terminus, the 525-residue chain is 2-isopropylmalate synthase (525 aa).

One can recognise a Pyruvate carboxyltransferase domain in the interval 5–267 (VIIFDTTLRD…HTGIHHQEIY (263 aa)). Mn(2+) contacts are provided by Asp-14, His-202, His-204, and Asn-238. A regulatory domain region spans residues 392–525 (RLEYFSVQSS…NNSQDMQETV (134 aa)).

The protein belongs to the alpha-IPM synthase/homocitrate synthase family. LeuA type 1 subfamily. In terms of assembly, homodimer. Requires Mn(2+) as cofactor.

It localises to the cytoplasm. The enzyme catalyses 3-methyl-2-oxobutanoate + acetyl-CoA + H2O = (2S)-2-isopropylmalate + CoA + H(+). It participates in amino-acid biosynthesis; L-leucine biosynthesis; L-leucine from 3-methyl-2-oxobutanoate: step 1/4. Functionally, catalyzes the condensation of the acetyl group of acetyl-CoA with 3-methyl-2-oxobutanoate (2-ketoisovalerate) to form 3-carboxy-3-hydroxy-4-methylpentanoate (2-isopropylmalate). The protein is 2-isopropylmalate synthase of Sodalis glossinidius (strain morsitans).